We begin with the raw amino-acid sequence, 311 residues long: GTPase Era (311 aa).

The Era-type G domain maps to 18–185 (RSGFVALIGA…AKYLAESVPN (168 aa)). A G1 region spans residues 26–33 (GAPNAGKS). Residue 26–33 (GAPNAGKS) coordinates GTP. The G2 stretch occupies residues 52 to 56 (QTTRA). Residues 73–76 (DTPG) form a G3 region. GTP contacts are provided by residues 73 to 77 (DTPGI) and 135 to 138 (NKVD). The segment at 135 to 138 (NKVD) is G4. The interval 164-166 (ISA) is G5. In terms of domain architecture, KH type-2 spans 216–293 (LHEELPYAST…HQFLFVKVRE (78 aa)).

This sequence belongs to the TRAFAC class TrmE-Era-EngA-EngB-Septin-like GTPase superfamily. Era GTPase family. As to quaternary structure, monomer.

Its subcellular location is the cytoplasm. The protein localises to the cell inner membrane. In terms of biological role, an essential GTPase that binds both GDP and GTP, with rapid nucleotide exchange. Plays a role in 16S rRNA processing and 30S ribosomal subunit biogenesis and possibly also in cell cycle regulation and energy metabolism. This is GTPase Era from Brucella melitensis biotype 1 (strain ATCC 23456 / CCUG 17765 / NCTC 10094 / 16M).